Here is a 74-residue protein sequence, read N- to C-terminus: High-potential iron-sulfur protein (74 aa).

Residues cysteine 36, cysteine 39, cysteine 53, and cysteine 67 each coordinate [4Fe-4S] cluster.

The protein belongs to the high-potential iron-sulfur protein (HiPIP) family. As to quaternary structure, homodimer.

Specific class of high-redox-potential 4Fe-4S ferredoxins. Functions in anaerobic electron transport in most purple and in some other photosynthetic bacteria and in at least one genus (Paracoccus) of halophilic, denitrifying bacteria. The polypeptide is High-potential iron-sulfur protein (hip) (Rubrivivax gelatinosus (Rhodocyclus gelatinosus)).